The sequence spans 320 residues: Putative HTH-type transcriptional regulatory protein VNG_2112C (320 aa).

Residues 132–189 (LADRREDERLSLGQLASELGVSRRTVSKYEDGMNASIEVAMRLEDLFGGELTAPVDVM) enclose the HTH cro/C1-type domain. A DNA-binding region (H-T-H motif) is located at residues 143–162 (LGQLASELGVSRRTVSKYED).

The polypeptide is Putative HTH-type transcriptional regulatory protein VNG_2112C (Halobacterium salinarum (strain ATCC 700922 / JCM 11081 / NRC-1) (Halobacterium halobium)).